A 171-amino-acid polypeptide reads, in one-letter code: Adenine phosphoribosyltransferase (171 aa).

The protein belongs to the purine/pyrimidine phosphoribosyltransferase family. In terms of assembly, homodimer.

The protein localises to the cytoplasm. It carries out the reaction AMP + diphosphate = 5-phospho-alpha-D-ribose 1-diphosphate + adenine. It functions in the pathway purine metabolism; AMP biosynthesis via salvage pathway; AMP from adenine: step 1/1. Catalyzes a salvage reaction resulting in the formation of AMP, that is energically less costly than de novo synthesis. The chain is Adenine phosphoribosyltransferase from Pelotomaculum thermopropionicum (strain DSM 13744 / JCM 10971 / SI).